A 141-amino-acid polypeptide reads, in one-letter code: Nucleoside diphosphate kinase (141 aa).

K11, F59, R87, T93, R104, and N114 together coordinate ATP. H117 functions as the Pros-phosphohistidine intermediate in the catalytic mechanism.

It belongs to the NDK family. As to quaternary structure, homotetramer. Mg(2+) is required as a cofactor.

It localises to the cytoplasm. It carries out the reaction a 2'-deoxyribonucleoside 5'-diphosphate + ATP = a 2'-deoxyribonucleoside 5'-triphosphate + ADP. The enzyme catalyses a ribonucleoside 5'-diphosphate + ATP = a ribonucleoside 5'-triphosphate + ADP. In terms of biological role, major role in the synthesis of nucleoside triphosphates other than ATP. The ATP gamma phosphate is transferred to the NDP beta phosphate via a ping-pong mechanism, using a phosphorylated active-site intermediate. The polypeptide is Nucleoside diphosphate kinase (Paraburkholderia xenovorans (strain LB400)).